The primary structure comprises 95 residues: Pyruvate dehydrogenase inhibitor (95 aa).

It belongs to the HesB/IscA family. In terms of assembly, interacts with the E1 module of pyruvate dehydrogenase (PdhA-PdhB).

Its function is as follows. Acts as an inhibitor of the pyruvate dehydrogenase. Overexpression does not affect growth with glucose as the main carbon source, but it leads to a dramatic growth defect when cells are grown with pyruvate as the sole carbon source. This Bacillus subtilis (strain 168) protein is Pyruvate dehydrogenase inhibitor.